A 307-amino-acid polypeptide reads, in one-letter code: tRNA pseudouridine synthase B (307 aa).

The Nucleophile role is filled by Asp-38.

This sequence belongs to the pseudouridine synthase TruB family. Type 1 subfamily.

It catalyses the reaction uridine(55) in tRNA = pseudouridine(55) in tRNA. Functionally, responsible for synthesis of pseudouridine from uracil-55 in the psi GC loop of transfer RNAs. The chain is tRNA pseudouridine synthase B from Lachnoclostridium phytofermentans (strain ATCC 700394 / DSM 18823 / ISDg) (Clostridium phytofermentans).